We begin with the raw amino-acid sequence, 467 residues long: Sexual differentiation process putative subtilase-type proteinase isp6 (467 aa).

Positions 86–176 (YIIVLQPDLS…AVERDQVVSI (91 aa)) constitute an Inhibitor I9 domain. A Peptidase S8 domain is found at 186–467 (PWGLARISHK…NLLAFNGAQE (282 aa)). Residues aspartate 221, histidine 253, and serine 409 each act as charge relay system in the active site.

It belongs to the peptidase S8 family.

The protein is Sexual differentiation process putative subtilase-type proteinase isp6 (isp6) of Schizosaccharomyces pombe (strain 972 / ATCC 24843) (Fission yeast).